The chain runs to 92 residues: MANSAQARKRARQAAKANSHNSALRSKFRTAIKAVRKAIDAGDKAKAAEIFQASSKTIDIIADKNIVHKNKAARHKSRLAAAIKGLQASAAQ.

Positions 1–25 are disordered; sequence MANSAQARKRARQAAKANSHNSALR.

Belongs to the bacterial ribosomal protein bS20 family.

Functionally, binds directly to 16S ribosomal RNA. This Paraburkholderia phytofirmans (strain DSM 17436 / LMG 22146 / PsJN) (Burkholderia phytofirmans) protein is Small ribosomal subunit protein bS20.